Consider the following 778-residue polypeptide: LPS-assembly protein LptD (778 aa).

Positions 1-23 (MKTRYSVLSVAMTAAFYTQYAQA) are cleaved as a signal peptide.

The protein belongs to the LptD family. Component of the lipopolysaccharide transport and assembly complex. Interacts with LptE and LptA.

It localises to the cell outer membrane. Together with LptE, is involved in the assembly of lipopolysaccharide (LPS) at the surface of the outer membrane. In Actinobacillus pleuropneumoniae serotype 5b (strain L20), this protein is LPS-assembly protein LptD.